The sequence spans 252 residues: Zinc finger CCCH domain-containing protein 28 (252 aa).

Basic and acidic residues predominate over residues 1-21 (MSHRRDYGSDAVHVRITHDPP). Positions 1–31 (MSHRRDYGSDAVHVRITHDPPPENCFPNSGD) are disordered. C3H1-type zinc fingers lie at residues 71-99 (FFKT…HSAE) and 143-171 (NWKT…HGPS).

In Arabidopsis thaliana (Mouse-ear cress), this protein is Zinc finger CCCH domain-containing protein 28.